The primary structure comprises 345 residues: Meiotically up-regulated gene 97 protein (345 aa).

2 consecutive transmembrane segments (helical) span residues 292 to 312 and 319 to 329; these read MWVL…GLWM and FAHGMLLNLGI.

It localises to the membrane. Required for correct meiotic chromosome segregation. Appears to also have role in sporulation. The protein is Meiotically up-regulated gene 97 protein (mug97) of Schizosaccharomyces pombe (strain 972 / ATCC 24843) (Fission yeast).